The primary structure comprises 470 residues: L-seryl-tRNA(Sec) selenium transferase (470 aa).

At Lys-294 the chain carries N6-(pyridoxal phosphate)lysine.

Belongs to the SelA family. Requires pyridoxal 5'-phosphate as cofactor.

It localises to the cytoplasm. It catalyses the reaction L-seryl-tRNA(Sec) + selenophosphate + H(+) = L-selenocysteinyl-tRNA(Sec) + phosphate. Its pathway is aminoacyl-tRNA biosynthesis; selenocysteinyl-tRNA(Sec) biosynthesis; selenocysteinyl-tRNA(Sec) from L-seryl-tRNA(Sec) (bacterial route): step 1/1. Converts seryl-tRNA(Sec) to selenocysteinyl-tRNA(Sec) required for selenoprotein biosynthesis. The polypeptide is L-seryl-tRNA(Sec) selenium transferase (Solidesulfovibrio magneticus (strain ATCC 700980 / DSM 13731 / RS-1) (Desulfovibrio magneticus)).